Reading from the N-terminus, the 334-residue chain is Ornithine carbamoyltransferase (334 aa).

Carbamoyl phosphate contacts are provided by residues 57 to 60 (STRT), glutamine 84, arginine 108, and 135 to 138 (HPTQ). L-ornithine contacts are provided by residues asparagine 168, aspartate 233, and 237–238 (SM). Carbamoyl phosphate contacts are provided by residues 275 to 276 (CL) and arginine 320.

Belongs to the aspartate/ornithine carbamoyltransferase superfamily. OTCase family.

Its subcellular location is the cytoplasm. The enzyme catalyses carbamoyl phosphate + L-ornithine = L-citrulline + phosphate + H(+). The protein operates within amino-acid biosynthesis; L-arginine biosynthesis; L-arginine from L-ornithine and carbamoyl phosphate: step 1/3. In terms of biological role, reversibly catalyzes the transfer of the carbamoyl group from carbamoyl phosphate (CP) to the N(epsilon) atom of ornithine (ORN) to produce L-citrulline. This Thermobifida fusca (strain YX) protein is Ornithine carbamoyltransferase.